We begin with the raw amino-acid sequence, 71 residues long: Brevinin-1SN2 (71 aa).

Positions 1–22 are cleaved as a signal peptide; the sequence is MFTMKKSLLLIFFLGTINLSLC. Residues 23 to 45 constitute a propeptide, removed in mature form; it reads EEERNADEDEKRDGDDESDVEVQ. Cys-65 and Cys-71 form a disulfide bridge.

It belongs to the frog skin active peptide (FSAP) family. Brevinin subfamily. Expressed by the skin glands.

The protein localises to the secreted. Antimicrobial peptide. Active against a variety of Gram-negative and Gram-positive bacterial strains. Active against fungus C.glabrata 090902 and C.albicans ATCC 10231. Shows hemolytic activity against human erythrocytes. The protein is Brevinin-1SN2 of Sylvirana spinulosa (Fine-spined frog).